The chain runs to 579 residues: Glutamine--tRNA ligase (579 aa).

Residues 41–51 (PEPNGYLHIGH) carry the 'HIGH' region motif. ATP is bound by residues 42–44 (EPN) and 48–54 (HIGHAKA). L-glutamine is bound by residues Asp74 and Tyr218. Residues Thr237, 285 to 286 (RL), and 293 to 295 (MSK) each bind ATP. A 'KMSKS' region motif is present at residues 292 to 296 (VMSKR).

It belongs to the class-I aminoacyl-tRNA synthetase family. As to quaternary structure, monomer.

Its subcellular location is the cytoplasm. The enzyme catalyses tRNA(Gln) + L-glutamine + ATP = L-glutaminyl-tRNA(Gln) + AMP + diphosphate. The protein is Glutamine--tRNA ligase of Xanthomonas axonopodis pv. citri (strain 306).